Reading from the N-terminus, the 101-residue chain is NADH-quinone oxidoreductase subunit K (101 aa).

A run of 3 helical transmembrane segments spans residues 4–24, 30–50, and 61–81; these read LSHY…GIFL, IILL…FVAF, and IFVF…LAIL.

The protein belongs to the complex I subunit 4L family. As to quaternary structure, NDH-1 is composed of 14 different subunits. Subunits NuoA, H, J, K, L, M, N constitute the membrane sector of the complex.

Its subcellular location is the cell inner membrane. It catalyses the reaction a quinone + NADH + 5 H(+)(in) = a quinol + NAD(+) + 4 H(+)(out). Functionally, NDH-1 shuttles electrons from NADH, via FMN and iron-sulfur (Fe-S) centers, to quinones in the respiratory chain. The immediate electron acceptor for the enzyme in this species is believed to be ubiquinone. Couples the redox reaction to proton translocation (for every two electrons transferred, four hydrogen ions are translocated across the cytoplasmic membrane), and thus conserves the redox energy in a proton gradient. This is NADH-quinone oxidoreductase subunit K from Nitrosomonas eutropha (strain DSM 101675 / C91 / Nm57).